Reading from the N-terminus, the 289-residue chain is uncharacterized protein (289 aa).

9 helical membrane-spanning segments follow: residues 4–24 (NLLA…GTVV), 44–64 (LNAL…LAYF), 68–88 (VALG…SLMF), 106–126 (IFWA…GRPL), 138–158 (IPVL…AEYV), 166–186 (ILGL…KAAV), 196–216 (GLIL…GTIV), 230–250 (LPAM…LVLG), and 258–278 (WEWI…IALS).

The protein localises to the cell membrane. This is an uncharacterized protein from Corynebacterium glutamicum (strain ATCC 13032 / DSM 20300 / JCM 1318 / BCRC 11384 / CCUG 27702 / LMG 3730 / NBRC 12168 / NCIMB 10025 / NRRL B-2784 / 534).